A 120-amino-acid chain; its full sequence is PYEKIGAELVKEVAKKTDDVAGDGTTTATVLAQALVREGLRNVAAGANPLGLKRGIEKAVEKITETLLKSAKEVETKDQIAATAGISAGDQTIGDLIAEAMDKVGNEGVITVEESNTFGL.

23 to 27 (DGTTT) is an ATP binding site.

It belongs to the chaperonin (HSP60) family. In terms of assembly, forms a cylinder of 14 subunits composed of two heptameric rings stacked back-to-back. Interacts with the co-chaperonin GroES.

Its subcellular location is the cytoplasm. The catalysed reaction is ATP + H2O + a folded polypeptide = ADP + phosphate + an unfolded polypeptide.. Together with its co-chaperonin GroES, plays an essential role in assisting protein folding. The GroEL-GroES system forms a nano-cage that allows encapsulation of the non-native substrate proteins and provides a physical environment optimized to promote and accelerate protein folding. The protein is Chaperonin GroEL of Mycolicibacterium rhodesiae (Mycobacterium rhodesiae).